Here is a 1154-residue protein sequence, read N- to C-terminus: Voltage-gated inwardly rectifying potassium channel KCNH2 (1154 aa).

The Cytoplasmic segment spans residues 1–403; sequence MPVRRGHVAP…RIHRWTILHY (403 aa). Residues 41 to 70 form the PAS domain; the sequence is VIYCNDGFCELCGYSRAEVMQRPCTCDFLH. The PAC domain occupies 92 to 144; sequence RKVEIAFYRKDGSCFLCLVDVVPVKNEDGAVIMFILNFEVVMEKDMVGSPARD. The segment at 233-312 is disordered; the sequence is ALVGSGSPPA…ASTGAMHPLR (80 aa). At S239 the chain carries Phosphoserine. The span at 258 to 269 shows a compositional bias: polar residues; the sequence is PDGSGSSCSLAR. S283, S284, S320, and S351 each carry phosphoserine. The chain crosses the membrane as a helical span at residues 404 to 424; that stretch reads SPFKAVWDWLILLLVIYTAVF. Residues 425–450 are Extracellular-facing; the sequence is TPYSAAFLLKETEEGSQAPDCGYACQ. The chain crosses the membrane as a helical span at residues 451–471; the sequence is PLAVVDLIVDIMFIVDILINF. Topologically, residues 472-495 are cytoplasmic; that stretch reads RTTYVNANEEVVSHPGRIAVHYFK. A helical transmembrane segment spans residues 496–516; the sequence is GWFLIDMVAAIPFDLLIFGSG. Topologically, residues 517–520 are extracellular; that stretch reads SEEL. Residues 521–541 traverse the membrane as a helical; Voltage-sensor segment; the sequence is IGLLKTARLLRLVRVARKLDR. Topologically, residues 542–547 are cytoplasmic; it reads YSEYGA. Residues 548 to 568 traverse the membrane as a helical segment; sequence AVLFLLMCTFALIAHWLACIW. The Extracellular portion of the chain corresponds to 569–611; it reads YAIGNMEQPNMDSHIGWLHNLGDQIGKPYNSSGLGGPSIKDKY. An intramembrane region (pore-forming) is located at residues 612 to 632; sequence VTALYFTFSSLTSVGFGNVSP. The Selectivity filter signature appears at 624–629; sequence SVGFGN. At 633–638 the chain is on the extracellular side; the sequence is NTNSEK. The helical transmembrane segment at 639–659 threads the bilayer; sequence IFSICVMLIGSLMYASIFGNV. Residues 660-1154 lie on the Cytoplasmic side of the membrane; the sequence is SAIIQRLYSG…LHRHGSDPGS (495 aa). Residues 742-842 are cNMP-binding domain; sequence PFRGATKGCL…IHRDDLLEVL (101 aa). The interval 870–985 is disordered; the sequence is GSPGSTELEG…DVEKSSDTCN (116 aa). Phosphoserine is present on residues S871 and S874. Basic residues predominate over residues 883–892; it reads RQRKRKLSFR. Positions 916-927 are enriched in gly residues; sequence GPSGRGQQGGPW. A compositionally biased stretch (low complexity) spans 928–939; it reads GESLSSGPSSPE. R1014 bears the Omega-N-methylarginine mark. A coiled-coil region spans residues 1037-1064; it reads RGDVESRLDALQRQLNRLETRLSADMAT. The segment at 1125-1154 is disordered; it reads DGPARRLSLPGQLGALTSQPLHRHGSDPGS. Position 1132 is a phosphoserine (S1132).

It belongs to the potassium channel family. H (Eag) (TC 1.A.1.20) subfamily. Kv11.1/KCNH2 sub-subfamily. In terms of assembly, the potassium channel is probably composed of a homo- or heterotetrameric complex of pore-forming alpha subunits that can associate with modulating beta subunits. Interacts with DNAJB12 and DNAJB14; chaperones DNAJB12 and DNAJB14 promote tetramerization. Heteromultimer with KCNH6/ERG2 and KCNH7/ERG3. Interacts with ALG10B. Forms a stable complex with KCNE1 or KCNE2, and that this heteromultimerization regulates Inward rectifier potassium channel activity. Interacts with CANX. The core-glycosylated, but not the fully glycosylated form interacts with RNF207. Interacts with NDFIP1 and NDFIP2; this interaction decreases the cell membrane expression by targeting KCNH2, through interaction with NEDD4L, for the degradation through the multivesicular bodies (MVBs)-lysosomal pathway. In terms of processing, phosphorylated on serine and threonine residues. Phosphorylation by PKA inhibits ion conduction.

The protein localises to the cell membrane. The enzyme catalyses K(+)(in) = K(+)(out). Pore-forming (alpha) subunit of voltage-gated inwardly rectifying potassium channel. Characterized by unusual gating kinetics by producing relatively small outward currents during membrane depolarization and large inward currents during subsequent repolarization which reflect a rapid inactivation during depolarization and quick recovery from inactivation but slow deactivation (closing) during repolarization. Channel properties are modulated by cAMP and subunit assembly. Forms a stable complex with KCNE1 or KCNE2, and that this heteromultimerization regulates inward rectifier potassium channel activity. The chain is Voltage-gated inwardly rectifying potassium channel KCNH2 from Sus scrofa (Pig).